Consider the following 225-residue polypeptide: 7-cyano-7-deazaguanine synthase (225 aa).

10–20 (FSGGQDSTTLA) serves as a coordination point for ATP. Zn(2+) is bound by residues Cys190, Cys205, Cys208, and Cys211.

This sequence belongs to the QueC family. Zn(2+) is required as a cofactor.

The catalysed reaction is 7-carboxy-7-deazaguanine + NH4(+) + ATP = 7-cyano-7-deazaguanine + ADP + phosphate + H2O + H(+). It participates in purine metabolism; 7-cyano-7-deazaguanine biosynthesis. In terms of biological role, catalyzes the ATP-dependent conversion of 7-carboxy-7-deazaguanine (CDG) to 7-cyano-7-deazaguanine (preQ(0)). The chain is 7-cyano-7-deazaguanine synthase from Helicobacter pylori (strain J99 / ATCC 700824) (Campylobacter pylori J99).